Reading from the N-terminus, the 170-residue chain is Cytochrome b6-f complex subunit 4 (170 aa).

3 helical membrane passes run 46–66 (LLFM…GLAV), 105–125 (LLGI…PFIE), and 141–161 (TVFL…TLPL).

It belongs to the cytochrome b family. PetD subfamily. The 4 large subunits of the cytochrome b6-f complex are cytochrome b6, subunit IV (17 kDa polypeptide, PetD), cytochrome f and the Rieske protein, while the 4 small subunits are PetG, PetL, PetM and PetN. The complex functions as a dimer.

Its subcellular location is the cellular thylakoid membrane. Its function is as follows. Component of the cytochrome b6-f complex, which mediates electron transfer between photosystem II (PSII) and photosystem I (PSI), cyclic electron flow around PSI, and state transitions. The sequence is that of Cytochrome b6-f complex subunit 4 from Synechococcus sp. (strain JA-3-3Ab) (Cyanobacteria bacterium Yellowstone A-Prime).